A 726-amino-acid polypeptide reads, in one-letter code: Long-chain-fatty-acid--CoA ligase ACSBG1 (726 aa).

A disordered region spans residues 1-39 (MPDSRAAPQESLLDASLGTTQENVGTSSLTDGQTLSKEP). A compositionally biased stretch (polar residues) spans 17-36 (LGTTQENVGTSSLTDGQTLS). At serine 36 the chain carries Phosphoserine. The residue at position 641 (tyrosine 641) is a Phosphotyrosine. The tract at residues 707–726 (SKQGSSLPGFSLRWQTGASS) is disordered.

This sequence belongs to the ATP-dependent AMP-binding enzyme family. Bubblegum subfamily.

It is found in the cytoplasm. The protein resides in the cytoplasmic vesicle. Its subcellular location is the microsome. It localises to the endoplasmic reticulum. The protein localises to the cell membrane. It catalyses the reaction a long-chain fatty acid + ATP + CoA = a long-chain fatty acyl-CoA + AMP + diphosphate. It carries out the reaction (E)-hexadec-2-enoate + ATP + CoA = (2E)-hexadecenoyl-CoA + AMP + diphosphate. The catalysed reaction is hexadecanoate + ATP + CoA = hexadecanoyl-CoA + AMP + diphosphate. Functionally, catalyzes the conversion of fatty acids such as long-chain and very long-chain fatty acids to their active form acyl-CoAs for both synthesis of cellular lipids, and degradation via beta-oxidation. Can activate diverse saturated, monosaturated and polyunsaturated fatty acids. This Bos taurus (Bovine) protein is Long-chain-fatty-acid--CoA ligase ACSBG1.